The chain runs to 718 residues: Protein Hook homolog 1 (718 aa).

One can recognise a Calponin-homology (CH) domain in the interval 8-124; the sequence is PLLCDSLILW…RLMQLILGCA (117 aa). 2 coiled-coil regions span residues 164 to 428 and 473 to 652; these read SASD…ELRY and LLLQ…AKLR.

The protein belongs to the hook family. Interacts with microtubules.

Its subcellular location is the cytoplasm. It is found in the cytoskeleton. Functionally, may function to promote vesicle trafficking and/or fusion. The chain is Protein Hook homolog 1 (HOOK1) from Gallus gallus (Chicken).